A 148-amino-acid chain; its full sequence is Large ribosomal subunit protein bL9 (148 aa).

This sequence belongs to the bacterial ribosomal protein bL9 family.

Functionally, binds to the 23S rRNA. This Bacillus mycoides (strain KBAB4) (Bacillus weihenstephanensis) protein is Large ribosomal subunit protein bL9.